We begin with the raw amino-acid sequence, 444 residues long: Tubulin beta chain (444 aa).

Residues Gln-11, Glu-69, Ser-138, Gly-142, Thr-143, Gly-144, Asn-204, and Asn-226 each contribute to the GTP site. A Mg(2+)-binding site is contributed by Glu-69.

It belongs to the tubulin family. In terms of assembly, dimer of alpha and beta chains. A typical microtubule is a hollow water-filled tube with an outer diameter of 25 nm and an inner diameter of 15 nM. Alpha-beta heterodimers associate head-to-tail to form protofilaments running lengthwise along the microtubule wall with the beta-tubulin subunit facing the microtubule plus end conferring a structural polarity. Microtubules usually have 13 protofilaments but different protofilament numbers can be found in some organisms and specialized cells. The cofactor is Mg(2+).

It localises to the cytoplasm. It is found in the cytoskeleton. In terms of biological role, tubulin is the major constituent of microtubules, a cylinder consisting of laterally associated linear protofilaments composed of alpha- and beta-tubulin heterodimers. Microtubules grow by the addition of GTP-tubulin dimers to the microtubule end, where a stabilizing cap forms. Below the cap, tubulin dimers are in GDP-bound state, owing to GTPase activity of alpha-tubulin. The sequence is that of Tubulin beta chain (TBB) from Onchocerca gibsoni.